The chain runs to 135 residues: Large-conductance mechanosensitive channel (135 aa).

Helical transmembrane passes span 10–30 (FAMR…AAFG) and 76–96 (GVFI…FLAI).

It belongs to the MscL family. Homopentamer.

It is found in the cell inner membrane. Its function is as follows. Channel that opens in response to stretch forces in the membrane lipid bilayer. May participate in the regulation of osmotic pressure changes within the cell. In Cronobacter sakazakii (strain ATCC BAA-894) (Enterobacter sakazakii), this protein is Large-conductance mechanosensitive channel.